The following is a 338-amino-acid chain: Formamidase (338 aa).

The CN hydrolase domain occupies 15–257 (VVIGLAQLAL…DEIVCCELRP (243 aa)). Residue Glu61 is the Proton acceptor of the active site. The Proton donor role is filled by Lys130. Cys163 functions as the Nucleophile in the catalytic mechanism.

This sequence belongs to the carbon-nitrogen hydrolase superfamily. Aliphatic amidase family.

It catalyses the reaction formamide + H2O = formate + NH4(+). Functionally, is an aliphatic amidase with a restricted substrate specificity, as it only hydrolyzes formamide. The polypeptide is Formamidase (Pseudomonas syringae pv. syringae (strain B728a)).